An 813-amino-acid polypeptide reads, in one-letter code: Protein mac-1 (813 aa).

2 coiled-coil regions span residues 58-89 and 122-152; these read VREA…VQEI and SDDS…TVLN. 2 disordered regions span residues 97–131 and 152–193; these read TRKR…ERAA and NLYT…GAVS. Polar residues predominate over residues 158 to 172; the sequence is SAPSTPVSTPKNQAT. Residues 175–191 show a composition bias toward low complexity; it reads PPGASAAPPALPRGLGA. Residues 246–253 and 575–582 each bind ATP; these read GPPGCGKT.

Belongs to the AAA ATPase family. In terms of assembly, found in a complex composed of ced-3, ced-4 and mac-1 or of ced-9, ced-4 and mac-1. Within the complex, interacts with ced-4.

Its function is as follows. Probably together with ced-9, plays a modest role in preventing ced-4 and caspase ced-3-mediated apoptosis. In Caenorhabditis elegans, this protein is Protein mac-1.